Consider the following 63-residue polypeptide: DNA gyrase inhibitor YacG (63 aa).

Residues Cys9, Cys12, Cys28, and Cys32 each coordinate Zn(2+).

It belongs to the DNA gyrase inhibitor YacG family. Interacts with GyrB. It depends on Zn(2+) as a cofactor.

In terms of biological role, inhibits all the catalytic activities of DNA gyrase by preventing its interaction with DNA. Acts by binding directly to the C-terminal domain of GyrB, which probably disrupts DNA binding by the gyrase. This chain is DNA gyrase inhibitor YacG, found in Salmonella arizonae (strain ATCC BAA-731 / CDC346-86 / RSK2980).